A 291-amino-acid polypeptide reads, in one-letter code: Glutamate racemase (291 aa).

Substrate-binding positions include 12–13 (DS) and 44–45 (YG). Residue C75 is the Proton donor/acceptor of the active site. Residue 76–77 (NT) coordinates substrate. Catalysis depends on C187, which acts as the Proton donor/acceptor. A substrate-binding site is contributed by 188–189 (TH). Low complexity predominate over residues 234–247 (ATQAAGARAQMAPS). Positions 234-257 (ATQAAGARAQMAPSAPEPKEGTPD) are disordered.

The protein belongs to the aspartate/glutamate racemases family.

The catalysed reaction is L-glutamate = D-glutamate. It participates in cell wall biogenesis; peptidoglycan biosynthesis. Functionally, provides the (R)-glutamate required for cell wall biosynthesis. In Koribacter versatilis (strain Ellin345), this protein is Glutamate racemase.